The primary structure comprises 197 residues: Xanthine phosphoribosyltransferase (197 aa).

2 residues coordinate xanthine: Leu-20 and Thr-27. Position 128–132 (Ala-128–Ala-132) interacts with 5-phospho-alpha-D-ribose 1-diphosphate. Residue Lys-156 participates in xanthine binding.

It belongs to the purine/pyrimidine phosphoribosyltransferase family. Xpt subfamily. As to quaternary structure, homodimer.

The protein localises to the cytoplasm. It carries out the reaction XMP + diphosphate = xanthine + 5-phospho-alpha-D-ribose 1-diphosphate. Its pathway is purine metabolism; XMP biosynthesis via salvage pathway; XMP from xanthine: step 1/1. Functionally, converts the preformed base xanthine, a product of nucleic acid breakdown, to xanthosine 5'-monophosphate (XMP), so it can be reused for RNA or DNA synthesis. The protein is Xanthine phosphoribosyltransferase of Lactococcus lactis subsp. cremoris (strain MG1363).